A 414-amino-acid chain; its full sequence is Probable indole-3-pyruvate monooxygenase YUCCA1 (414 aa).

Position 25 to 30 (25 to 30 (GAGPSG)) interacts with FAD. Residue 189–194 (GCGNSG) coordinates NADP(+).

It belongs to the FMO family. FAD serves as cofactor. In terms of tissue distribution, expressed in the apical meristems and young floral primordia. Detected in the floral meristems and at the base of the floral organs.

The catalysed reaction is indole-3-pyruvate + NADPH + O2 + H(+) = (indol-3-yl)acetate + CO2 + NADP(+) + H2O. It functions in the pathway plant hormone metabolism; auxin biosynthesis. Involved in auxin biosynthesis, but not in the tryptamine or the CYP79B2/B3 branches. Catalyzes in vitro the N-oxidation of tryptamine to form N-hydroxyl tryptamine. Involved during embryogenesis and seedling development. Required for the formation of floral organs and vascular tissues. Belongs to the set of redundant YUCCA genes probably responsible for auxin biosynthesis in shoots. The protein is Probable indole-3-pyruvate monooxygenase YUCCA1 (YUC1) of Arabidopsis thaliana (Mouse-ear cress).